Reading from the N-terminus, the 63-residue chain is Conotoxin Gm5.1 (63 aa).

A signal peptide spans 1–21 (MRYLPVFVILLLLIASIPSDT). Residues 22-50 (VQLKTKDDMPLASFHGNGRRILRMLSNKR) constitute a propeptide that is removed on maturation.

It belongs to the conotoxin T superfamily. Contains 2 disulfide bonds that can be either 'C1-C3, C2-C4' or 'C1-C4, C2-C3', since these disulfide connectivities have been observed for conotoxins with cysteine framework V (for examples, see AC P0DQQ7 and AC P81755). In terms of tissue distribution, expressed by the venom duct.

It localises to the secreted. This is Conotoxin Gm5.1 from Conus gloriamaris (Glory-of-the-Sea cone).